We begin with the raw amino-acid sequence, 285 residues long: HTH-type transcriptional regulator MurR (285 aa).

An HTH rpiR-type domain is found at Met-1–Ser-77. The H-T-H motif DNA-binding region spans Ser-37–Gln-56. One can recognise an SIS domain in the interval Ile-128 to Val-268.

Homotetramer.

Its pathway is amino-sugar metabolism; N-acetylmuramate degradation [regulation]. In terms of biological role, represses the expression of the murPQ operon involved in the uptake and degradation of N-acetylmuramic acid (MurNAc). Binds to two adjacent inverted repeats within the operator region. MurNAc 6-phosphate, the substrate of MurQ, is the specific inducer that weakens binding of MurR to the operator. In Escherichia coli O9:H4 (strain HS), this protein is HTH-type transcriptional regulator MurR.